Consider the following 389-residue polypeptide: Cytochrome oxidase assembly protein SHY1 (389 aa).

Residues 1–71 (MSLLGARSTY…SRRERSFGKK (71 aa)) are Mitochondrial matrix-facing. Residues 72–92 (IVLGLMFAMPIISFYLGTWQV) traverse the membrane as a helical segment. At 93-341 (RRLKWKTKLI…KPTIDLKNNH (249 aa)) the chain is on the mitochondrial intermembrane side. The interval 292–311 (GTQAVDNNTSKPRSRQEMPT) is disordered. Residues 342–362 (LQYLVTWYGLSFLSTIFLIVA) traverse the membrane as a helical segment. The Mitochondrial matrix portion of the chain corresponds to 363 to 389 (LRKAKRGGVVSQDQLMKEKLKHSRKYM).

It belongs to the SURF1 family. In terms of assembly, interacts with COA1, COX14 and MSS51.

It localises to the mitochondrion inner membrane. Its function is as follows. Required for efficient assembly of cytochrome c oxidase in the mitochondrial inner membrane. Involved in a step that couples MSS51-COX14-dependent regulation of COX1 translation to early steps of cytochrome c oxidase assembly. This chain is Cytochrome oxidase assembly protein SHY1 (SHY1), found in Saccharomyces cerevisiae (strain ATCC 204508 / S288c) (Baker's yeast).